Consider the following 838-residue polypeptide: MVQFDVEKTLEELTLGEKVALTAGTDFWHTAAVPRLNIPSLRMSDGPNGVRGTRFFNGTRAACFPCSTALGATWDTELLYEVGRLMAEESIAKGSHIILGPTINTQRSPLGGRGFESFAEDGVLSGLLAGNYCKGLQDKGVAATLKHFVCNDQEHERLAVDSIVTMRAMREIYLMPFHLAMRLCKTACVMTAYNKINGTHVSENKQIITDILRKEWGWDGLVMSDWFGTYSTSDAINAGLDLEMPGPTRWRGTALAHAVSSNKAFEYVLDERVRNVLNLHNFVEPLGIPENAPEEALNRPEDQALLRRAAAESVVLMKNEDNILPLKKEKSILVIGPNAKTAAYCGGGSASLDAYYTVAPFDGVKAKSEGEVSFSQGVYSYNELPVLGPLLKTEEGEKGFKFRVYNEPSSNPNRELLDELRLENSLGFLMDYKHPKVTSFLFYADMEGYFTPEEDGIYDFGVTVQGTGKLYIDGELVVDNSKNQRQGTAFFGNATVEEKGSKELKAGQTYKVVVEFGSAPTSDLDMRGVVVFGPGGFRFGAARRVGQEELISKAAELASQADQVVIFAGLTSEWETEGHDRDHMDLPAGSDEMISRVLDANPNAVVVIQSGTPVTMPWAHKTKALLQAWFGGNECGNGIADVLYGDVNPSAKLPLSFPVRLQDNPSYLNFRSERGRVLYGEDVYVGYRYYEKVDLAPLFPFGHGLSYTTFSRSDLSLATVPEKRQLEDGEPITATVTVTNTGDVAGAEVVQLWIVPPPTGVNRPVRELKGFAKVFLNPGESKTVEIVVEKKLATSWWDEQREKWASEKGTYKVLVTGTGDEVLKSSFEVEKTRFWLGL.

2 N-linked (GlcNAc...) asparagine glycosylation sites follow: Asn57 and Asn197. Asp225 is a catalytic residue. A PA14 domain is found at 395–555 (EGEKGFKFRV…GQEELISKAA (161 aa)). An N-linked (GlcNAc...) asparagine glycan is attached at Asn493.

This sequence belongs to the glycosyl hydrolase 3 family.

The protein resides in the secreted. The enzyme catalyses Hydrolysis of terminal, non-reducing beta-D-glucosyl residues with release of beta-D-glucose.. The protein operates within glycan metabolism; cellulose degradation. Beta-glucosidases are one of a number of cellulolytic enzymes involved in the degradation of cellulosic biomass. Catalyzes the last step releasing glucose from the inhibitory cellobiose. In Aspergillus clavatus (strain ATCC 1007 / CBS 513.65 / DSM 816 / NCTC 3887 / NRRL 1 / QM 1276 / 107), this protein is Probable beta-glucosidase I (bglI).